Consider the following 55-residue polypeptide: Regulatory protein MokB (55 aa).

Its function is as follows. Overlapping regulatory peptide whose translation enables hokB expression. In Escherichia coli (strain K12), this protein is Regulatory protein MokB (mokB).